Reading from the N-terminus, the 123-residue chain is Large ribosomal subunit protein uL14 (123 aa).

This sequence belongs to the universal ribosomal protein uL14 family. Part of the 50S ribosomal subunit. Forms a cluster with proteins L3 and L19. In the 70S ribosome, L14 and L19 interact and together make contacts with the 16S rRNA in bridges B5 and B8.

Binds to 23S rRNA. Forms part of two intersubunit bridges in the 70S ribosome. This Buchnera aphidicola subsp. Cinara cedri (strain Cc) protein is Large ribosomal subunit protein uL14.